Reading from the N-terminus, the 105-residue chain is Large ribosomal subunit protein uL24 (105 aa).

It belongs to the universal ribosomal protein uL24 family. In terms of assembly, part of the 50S ribosomal subunit.

Functionally, one of two assembly initiator proteins, it binds directly to the 5'-end of the 23S rRNA, where it nucleates assembly of the 50S subunit. One of the proteins that surrounds the polypeptide exit tunnel on the outside of the subunit. This chain is Large ribosomal subunit protein uL24, found in Methylocella silvestris (strain DSM 15510 / CIP 108128 / LMG 27833 / NCIMB 13906 / BL2).